The following is a 149-amino-acid chain: 3-dehydroquinate dehydratase (149 aa).

The Proton acceptor role is filled by tyrosine 26. Substrate-binding residues include asparagine 77, histidine 83, and aspartate 90. Histidine 103 acts as the Proton donor in catalysis. Substrate contacts are provided by residues 104–105 (LS) and arginine 114.

The protein belongs to the type-II 3-dehydroquinase family. In terms of assembly, homododecamer.

It catalyses the reaction 3-dehydroquinate = 3-dehydroshikimate + H2O. It participates in metabolic intermediate biosynthesis; chorismate biosynthesis; chorismate from D-erythrose 4-phosphate and phosphoenolpyruvate: step 3/7. In terms of biological role, catalyzes a trans-dehydration via an enolate intermediate. This Aliivibrio salmonicida (strain LFI1238) (Vibrio salmonicida (strain LFI1238)) protein is 3-dehydroquinate dehydratase.